We begin with the raw amino-acid sequence, 208 residues long: Protein-L-isoaspartate O-methyltransferase (208 aa).

S59 is an active-site residue.

Belongs to the methyltransferase superfamily. L-isoaspartyl/D-aspartyl protein methyltransferase family.

The protein resides in the cytoplasm. It carries out the reaction [protein]-L-isoaspartate + S-adenosyl-L-methionine = [protein]-L-isoaspartate alpha-methyl ester + S-adenosyl-L-homocysteine. In terms of biological role, catalyzes the methyl esterification of L-isoaspartyl residues in peptides and proteins that result from spontaneous decomposition of normal L-aspartyl and L-asparaginyl residues. It plays a role in the repair and/or degradation of damaged proteins. The chain is Protein-L-isoaspartate O-methyltransferase from Vibrio atlanticus (strain LGP32) (Vibrio splendidus (strain Mel32)).